Consider the following 295-residue polypeptide: Ribosomal protein L11 methyltransferase (295 aa).

4 residues coordinate S-adenosyl-L-methionine: Thr-150, Gly-171, Asp-193, and Asn-232.

Belongs to the methyltransferase superfamily. PrmA family.

The protein resides in the cytoplasm. The enzyme catalyses L-lysyl-[protein] + 3 S-adenosyl-L-methionine = N(6),N(6),N(6)-trimethyl-L-lysyl-[protein] + 3 S-adenosyl-L-homocysteine + 3 H(+). Its function is as follows. Methylates ribosomal protein L11. This is Ribosomal protein L11 methyltransferase from Neisseria gonorrhoeae (strain ATCC 700825 / FA 1090).